Here is a 107-residue protein sequence, read N- to C-terminus: Translation initiation factor IF-1, chloroplastic (107 aa).

An S1-like domain is found at 8 to 83 (REKKNPREAK…SKGRIIYRLP (76 aa)).

This sequence belongs to the IF-1 family. Component of the 30S ribosomal translation pre-initiation complex which assembles on the 30S ribosome in the order IF-2 and IF-3, IF-1 and N-formylmethionyl-tRNA(fMet); mRNA recruitment can occur at any time during PIC assembly.

It localises to the plastid. The protein resides in the chloroplast. Functionally, one of the essential components for the initiation of protein synthesis. Stabilizes the binding of IF-2 and IF-3 on the 30S subunit to which N-formylmethionyl-tRNA(fMet) subsequently binds. Helps modulate mRNA selection, yielding the 30S pre-initiation complex (PIC). Upon addition of the 50S ribosomal subunit IF-1, IF-2 and IF-3 are released leaving the mature 70S translation initiation complex. In Lolium perenne (Perennial ryegrass), this protein is Translation initiation factor IF-1, chloroplastic.